A 609-amino-acid polypeptide reads, in one-letter code: All-trans-retinol 13,14-reductase (609 aa).

The first 21 residues, 1-21 (MWITALLLVVLLLVVVHRVYV), serve as a signal peptide directing secretion.

It belongs to the carotenoid/retinoid oxidoreductase family. CrtISO subfamily. The cofactor is NAD(+). It depends on NADP(+) as a cofactor. FAD is required as a cofactor. Highly expressed in liver, kidney and heart.

It is found in the endoplasmic reticulum membrane. It carries out the reaction all-trans-13,14-dihydroretinol + A = all-trans-retinol + AH2. Functionally, catalyzes the saturation of all-trans-retinol to all-trans-13,14-dihydroretinol. Does not exhibit any activity toward all-trans-retinoic acid, nor 9-cis, 11-cis or 13-cis-retinol isomers. May play a role in the metabolism of vitamin A. Independently of retinol conversion, may regulate liver metabolism upstream of MLXIPL/ChREBP. May play a role in adipocyte differentiation. This chain is All-trans-retinol 13,14-reductase (Retsat), found in Rattus norvegicus (Rat).